A 264-amino-acid chain; its full sequence is tRNA pseudouridine synthase A (264 aa).

Asp54 functions as the Nucleophile in the catalytic mechanism. Tyr113 serves as a coordination point for substrate.

Belongs to the tRNA pseudouridine synthase TruA family. Homodimer.

It catalyses the reaction uridine(38/39/40) in tRNA = pseudouridine(38/39/40) in tRNA. Functionally, formation of pseudouridine at positions 38, 39 and 40 in the anticodon stem and loop of transfer RNAs. The protein is tRNA pseudouridine synthase A of Leptospira biflexa serovar Patoc (strain Patoc 1 / Ames).